We begin with the raw amino-acid sequence, 499 residues long: Alpha-amylase A type-3 (499 aa).

The signal sequence occupies residues 1-21 (MMVAWWSLFLYGLQVAAPALA). A disulfide bridge connects residues cysteine 51 and cysteine 59. Substrate is bound at residue tryptophan 104. A Ca(2+)-binding site is contributed by asparagine 142. Residue histidine 143 coordinates substrate. The cysteines at positions 171 and 185 are disulfide-linked. Positions 183 and 196 each coordinate Ca(2+). Asparagine 218 carries N-linked (GlcNAc...) asparagine glycosylation. A substrate-binding site is contributed by arginine 225. Ca(2+) is bound by residues aspartate 227, histidine 231, and glutamate 251. Aspartate 227 functions as the Nucleophile in the catalytic mechanism. 230–231 (KH) serves as a coordination point for substrate. Glutamate 251 functions as the Proton donor in the catalytic mechanism. A substrate-binding site is contributed by glycine 255. Residues cysteine 261 and cysteine 304 are joined by a disulfide bond. Arginine 365 serves as a coordination point for substrate. Residues cysteine 461 and cysteine 496 are joined by a disulfide bond.

Belongs to the glycosyl hydrolase 13 family. As to quaternary structure, monomer. The cofactor is Ca(2+).

Its subcellular location is the secreted. It catalyses the reaction Endohydrolysis of (1-&gt;4)-alpha-D-glucosidic linkages in polysaccharides containing three or more (1-&gt;4)-alpha-linked D-glucose units.. The sequence is that of Alpha-amylase A type-3 (amy3) from Aspergillus oryzae (strain ATCC 42149 / RIB 40) (Yellow koji mold).